We begin with the raw amino-acid sequence, 490 residues long: Keratin, type II cytoskeletal 8 (490 aa).

Residues 1–27 (MSIRVTQKSYKMSTSGPRAFSSRSFTS) are compositionally biased toward polar residues. The segment at 1–48 (MSIRVTQKSYKMSTSGPRAFSSRSFTSGPGARISSSSFSRVGSSSSSF) is disordered. Residues 1–96 (MSIRVTQKSY…DPNIQAVRTQ (96 aa)) form a head region. Serine 9 bears the Phosphoserine; by PKC/PRKCE mark. Lysine 11 participates in a covalent cross-link: Glycyl lysine isopeptide (Lys-Gly) (interchain with G-Cter in SUMO2). Phosphoserine occurs at positions 13, 15, 21, and 22. Position 23 is an omega-N-methylarginine (arginine 23). Phosphoserine; by PKC/PRKCE is present on serine 24. Threonine 26 is modified (phosphothreonine). Serine 27 bears the Phosphoserine mark. An Omega-N-methylarginine modification is found at arginine 32. Phosphoserine is present on residues serine 34, serine 37, and serine 39. A compositionally biased stretch (low complexity) spans 34–48 (SSSSFSRVGSSSSSF). Residue arginine 40 is modified to Omega-N-methylarginine. Residues serine 43, serine 44, and serine 47 each carry the phosphoserine modification. Arginine 49 bears the Asymmetric dimethylarginine; alternate mark. Arginine 49 is modified (omega-N-methylarginine; alternate). Serine 51 carries the phosphoserine modification. Serine 80 is modified (phosphoserine; by MAPK). The segment at 97-132 (EKEQIKSLNNKFASFIDKVRFLEQQNKMLETKWSLL) is coil 1A. One can recognise an IF rod domain in the interval 97-408 (EKEQIKSLNN…KLLEGEESRL (312 aa)). An N6-malonyllysine modification is found at lysine 107. Residues lysine 128 and lysine 136 each participate in a glycyl lysine isopeptide (Lys-Gly) (interchain with G-Cter in SUMO2) cross-link. Residues 133–149 (QQQKTSRSNMDNMFESY) form a linker 1 region. The segment at 150 to 241 (INNLRRQLEA…QIHEEEIREL (92 aa)) is coil 1B. Lysine 203 is covalently cross-linked (Glycyl lysine isopeptide (Lys-Gly) (interchain with G-Cter in SUMO1); alternate). Lysine 203 is covalently cross-linked (Glycyl lysine isopeptide (Lys-Gly) (interchain with G-Cter in SUMO2); alternate). Lysine 213 is modified (N6-acetyllysine). Positions 242–265 (QSQISDTSVVLSMDNSRSLDMDGI) are linker 12. Phosphoserine is present on residues serine 259 and serine 280. Residues 266–403 (IAEVRAQYED…ITTYRKLLEG (138 aa)) are coil 2. Positions 267–387 (AEVRAQYEDI…REYQELMNVK (121 aa)) are necessary for interaction with PNN. Lysine 291 is covalently cross-linked (Glycyl lysine isopeptide (Lys-Gly) (interchain with G-Cter in SUMO2)). A Glycyl lysine isopeptide (Lys-Gly) (interchain with G-Cter in SUMO2); alternate cross-link involves residue lysine 301. Lysine 301 bears the N6-acetyllysine; alternate mark. Lysine 310 participates in a covalent cross-link: Glycyl lysine isopeptide (Lys-Gly) (interchain with G-Cter in SUMO2). Lysine 331 participates in a covalent cross-link: Glycyl lysine isopeptide (Lys-Gly) (interchain with G-Cter in SUMO2); alternate. At lysine 331 the chain carries N6-acetyllysine; alternate. A Phosphoserine modification is found at serine 336. Lysine 399 participates in a covalent cross-link: Glycyl lysine isopeptide (Lys-Gly) (interchain with G-Cter in SUMO2). Residues 404–490 (EESRLESGMQ…VSESSDVVSK (87 aa)) form a tail region. 7 positions are modified to phosphoserine: serine 406, serine 410, serine 416, serine 423, serine 430, serine 432, and serine 438. Lysine 479 participates in a covalent cross-link: Glycyl lysine isopeptide (Lys-Gly) (interchain with G-Cter in SUMO1); alternate. Lysine 479 participates in a covalent cross-link: Glycyl lysine isopeptide (Lys-Gly) (interchain with G-Cter in SUMO2); alternate. A phosphoserine mark is found at serine 482, serine 484, serine 485, and serine 489.

The protein belongs to the intermediate filament family. Heterotetramer of two type I and two type II keratins. Forms a heterodimer with KRT18. Associates with KRT20. Interacts with PLEC isoform 1C, when in a heterodimer with KRT18. Interacts with PNN. When associated with KRT19, interacts with DMD. Interacts with TCHP. Interacts with APEX1. Interacts with GPER1. Interacts with EPPK1. Interacts with PKP1 and PKP2. Post-translationally, phosphorylation on serine residues is enhanced during EGF stimulation and mitosis. Ser-80 phosphorylation plays an important role in keratin filament reorganization. In terms of processing, O-glycosylated. O-GlcNAcylation at multiple sites increases solubility, and decreases stability by inducing proteasomal degradation. O-glycosylated (O-GlcNAcylated), in a cell cycle-dependent manner. In terms of tissue distribution, expressed in abundance in the epithelia of colon, bladder, ileum, and stomach, with lower expression observed in earskin (at protein level). Also expressed in pancreas, liver, dudenum and jejunum.

The protein resides in the cytoplasm. It is found in the nucleus. The protein localises to the nucleoplasm. It localises to the nucleus matrix. Together with KRT19, helps to link the contractile apparatus to dystrophin at the costameres of striated muscle. The protein is Keratin, type II cytoskeletal 8 (Krt8) of Mus musculus (Mouse).